The sequence spans 1105 residues: Serine/threonine-protein kinase 4 homolog B (1105 aa).

The 252-residue stretch at Phe-23–Phe-274 folds into the Protein kinase domain. ATP contacts are provided by residues Leu-29–Val-37 and Lys-52. Asp-142 serves as the catalytic Proton acceptor. Disordered regions lie at residues Ser-348–Asn-396, Ser-411–Ala-482, and Pro-495–Leu-541. Low complexity-rich tracts occupy residues Gln-358–Asn-396 and Ser-411–Asn-437. A compositionally biased stretch (polar residues) spans Asp-438 to Gln-458. 2 stretches are compositionally biased toward low complexity: residues Asn-459–Ser-473 and Pro-513–Leu-541. The segment at Ser-516–Asn-1105 is calpain-like cysteine protease-like. 4 domain III regions span residues Glu-641–Phe-668, Val-791–Ile-830, Ser-836–Gln-972, and Val-1076–Tyr-1103.

It in the N-terminal section; belongs to the protein kinase superfamily. STE Ser/Thr protein kinase family. STE20 subfamily. This sequence in the C-terminal section; belongs to the peptidase C2 family. Mn(2+) is required as a cofactor.

It catalyses the reaction L-seryl-[protein] + ATP = O-phospho-L-seryl-[protein] + ADP + H(+). The catalysed reaction is L-threonyl-[protein] + ATP = O-phospho-L-threonyl-[protein] + ADP + H(+). In terms of biological role, probable serine/threonine-protein kinase. This chain is Serine/threonine-protein kinase 4 homolog B (krsB), found in Dictyostelium discoideum (Social amoeba).